Reading from the N-terminus, the 144-residue chain is MSKVQLYGTPMRGGCCGGCECPNCGFKLGGVVAGVLAGGKVSKRRKSVAKKGGIGTKGGAKKSPWVAFLQRYSKEHGVKYSEAMQSPKAKKEYSALKKSGKIHKVGGSKSSGHRKTKKPKKSMKGGSKTKKLSEKQLMKELLAM.

Positions 90–144 (KKEYSALKKSGKIHKVGGSKSSGHRKTKKPKKSMKGGSKTKKLSEKQLMKELLAM) are disordered. The segment covering 98 to 130 (KSGKIHKVGGSKSSGHRKTKKPKKSMKGGSKTK) has biased composition (basic residues).

This is an uncharacterized protein from Sputnik virophage.